Reading from the N-terminus, the 478-residue chain is Maintenance of telomere capping protein 1 (478 aa).

The segment at 1–153 (MSENKNSEAE…LHDPIASISN (153 aa)) is disordered. Basic and acidic residues-rich tracts occupy residues 77-87 (TDKKGVEKKAP) and 95-124 (AQDE…QQQE). The segment covering 125–141 (KEEEEEEEEEEEEEEEE) has biased composition (acidic residues). Serine 273 carries the post-translational modification Phosphoserine. 2 stretches are compositionally biased toward basic and acidic residues: residues 321 to 336 (QKQQ…DDRS) and 421 to 435 (SEER…KQKE). 2 disordered regions span residues 321 to 341 (QKQQ…ISSN) and 416 to 448 (TGST…IIDP). Residue serine 436 is modified to Phosphoserine. Acidic residues predominate over residues 436–447 (SEDEDEDDEIID).

Belongs to the MTC1 family. In terms of assembly, interacts with ribosomes.

The protein localises to the cytoplasm. It localises to the cytoplasmic vesicle. The protein resides in the COPI-coated vesicle. Involved in telomere capping. This Saccharomyces cerevisiae (strain ATCC 204508 / S288c) (Baker's yeast) protein is Maintenance of telomere capping protein 1 (MTC1).